A 252-amino-acid chain; its full sequence is Probable transcriptional regulatory protein Fnod_1106 (252 aa).

It belongs to the TACO1 family.

The protein resides in the cytoplasm. The sequence is that of Probable transcriptional regulatory protein Fnod_1106 from Fervidobacterium nodosum (strain ATCC 35602 / DSM 5306 / Rt17-B1).